Reading from the N-terminus, the 95-residue chain is NADH-quinone oxidoreductase subunit K (95 aa).

Transmembrane regions (helical) follow at residues 1 to 21, 25 to 45, and 59 to 79; these read MSYLLASALLFALGVYGVLTR, ILVFLSIELMLNAANLSLVGF, and MVIAVAAAEVAVGLGLIVAIF.

Belongs to the complex I subunit 4L family. In terms of assembly, NDH-1 is composed of 15 different subunits. Subunits NuoA, H, J, K, L, M, N constitute the membrane sector of the complex.

It is found in the cell inner membrane. The enzyme catalyses a quinone + NADH + 5 H(+)(in) = a quinol + NAD(+) + 4 H(+)(out). NDH-1 shuttles electrons from NADH, via FMN and iron-sulfur (Fe-S) centers, to quinones in the respiratory chain. The immediate electron acceptor for the enzyme in this species is believed to be a menaquinone. Couples the redox reaction to proton translocation (for every two electrons transferred, four hydrogen ions are translocated across the cytoplasmic membrane), and thus conserves the redox energy in a proton gradient. The chain is NADH-quinone oxidoreductase subunit K from Thermus thermophilus (strain ATCC BAA-163 / DSM 7039 / HB27).